The sequence spans 71 residues: Small ribosomal subunit protein bS18 (71 aa).

This sequence belongs to the bacterial ribosomal protein bS18 family. Part of the 30S ribosomal subunit. Forms a tight heterodimer with protein bS6.

In terms of biological role, binds as a heterodimer with protein bS6 to the central domain of the 16S rRNA, where it helps stabilize the platform of the 30S subunit. In Synechocystis sp. (strain ATCC 27184 / PCC 6803 / Kazusa), this protein is Small ribosomal subunit protein bS18.